A 1099-amino-acid chain; its full sequence is Adenylate-forming reductase Nps11 (1099 aa).

An adenylation (A) domain region spans residues 29 to 360; it reads AEHNSNVPFF…GTECGGLNSM (332 aa). Residues H244, 347-348, T352, and 432-435 each bind AMP; these read NV and LVGR. The region spanning 578–664 is the Carrier domain; it reads WSEESLVVWL…RLSQALARVV (87 aa). At S613 the chain carries O-(pantetheine 4'-phosphoryl)serine. The tract at residues 717–952 is reductase (R) domain; the sequence is LTGSTGGLGS…VVSWLPPHAV (236 aa). Residues 721–724, 809–811, Y883, and K887 each bind NADP(+); these read TGGL and NAW.

Belongs to the adenylate-forming reductase family.

Functionally, adenylate-forming reductase, a natural product biosynthesis enzyme that resembles non-ribosomal peptide synthetases, yet serves to modify one substrate, rather than to condense two or more building blocks. The A-domain preferentially accepts benzoic acid as substrate. The natural product of the enzyme is not yet known. The chain is Adenylate-forming reductase Nps11 from Serpula lacrymans var. lacrymans (strain S7.9) (Dry rot fungus).